The chain runs to 220 residues: MVEMNKRGQFFIIGGVILSIGLILFFLLGFNSYTSDGSYLTVFKMKDVKNSIESCLINSLTSNSNLSKNLDMLKNNYKDEGIEINYKKIIFSNIRYEAKNLTFNFSLYNGNFSYNISNYGFGGAFNGSLNVSNYVFSKNLLLNISENGSVTGSFNITGSYVNVFVYDRFGNLILNETIYNNSNEKSLYYYILNVSKEGILLYLLWQRMFLTTHWQKMYPL.

Residues 10–30 (FFIIGGVILSIGLILFFLLGF) traverse the membrane as a helical segment.

The protein resides in the membrane. This is an uncharacterized protein from Methanocaldococcus jannaschii (strain ATCC 43067 / DSM 2661 / JAL-1 / JCM 10045 / NBRC 100440) (Methanococcus jannaschii).